The sequence spans 118 residues: Myotrophin (118 aa).

ANK repeat units follow at residues 1–30 (MGDK…DVNR), 34–65 (GGRK…NAPD), and 67–98 (HGIT…NRKG).

The protein belongs to the myotrophin family.

It localises to the cytoplasm. The protein localises to the nucleus. Its subcellular location is the perinuclear region. In terms of biological role, regulates NF-kappa-B transcription factor activity. Promotes growth of cardiomyocytes, but not cardiomyocyte proliferation. Promotes cardiac muscle hypertrophy. Plays a role in the regulation of the growth of actin filaments. Inhibits the activity of the F-actin-capping protein complex. In Danio rerio (Zebrafish), this protein is Myotrophin (mtpn).